We begin with the raw amino-acid sequence, 136 residues long: DNA-directed RNA polymerase subunit omega (136 aa).

Belongs to the RNA polymerase subunit omega family. As to quaternary structure, the RNAP catalytic core consists of 2 alpha, 1 beta, 1 beta' and 1 omega subunit. When a sigma factor is associated with the core the holoenzyme is formed, which can initiate transcription.

It catalyses the reaction RNA(n) + a ribonucleoside 5'-triphosphate = RNA(n+1) + diphosphate. Its function is as follows. Promotes RNA polymerase assembly. Latches the N- and C-terminal regions of the beta' subunit thereby facilitating its interaction with the beta and alpha subunits. The chain is DNA-directed RNA polymerase subunit omega from Methylorubrum extorquens (strain CM4 / NCIMB 13688) (Methylobacterium extorquens).